Here is a 208-residue protein sequence, read N- to C-terminus: Guanylate kinase (208 aa).

One can recognise a Guanylate kinase-like domain in the interval 21 to 201 (GRVVVLSGPS…ACAELVSLLV (181 aa)). 28 to 35 (GPSAVGKS) is an ATP binding site.

Belongs to the guanylate kinase family.

It is found in the cytoplasm. It catalyses the reaction GMP + ATP = GDP + ADP. Its function is as follows. Essential for recycling GMP and indirectly, cGMP. This chain is Guanylate kinase (gmk), found in Mycobacterium bovis (strain ATCC BAA-935 / AF2122/97).